The sequence spans 469 residues: tRNA(Ile)-lysidine synthase (469 aa).

Residue 26 to 31 coordinates ATP; that stretch reads SGGPDS.

Belongs to the tRNA(Ile)-lysidine synthase family.

It localises to the cytoplasm. It catalyses the reaction cytidine(34) in tRNA(Ile2) + L-lysine + ATP = lysidine(34) in tRNA(Ile2) + AMP + diphosphate + H(+). Its function is as follows. Ligates lysine onto the cytidine present at position 34 of the AUA codon-specific tRNA(Ile) that contains the anticodon CAU, in an ATP-dependent manner. Cytidine is converted to lysidine, thus changing the amino acid specificity of the tRNA from methionine to isoleucine. This chain is tRNA(Ile)-lysidine synthase, found in Clostridium perfringens (strain ATCC 13124 / DSM 756 / JCM 1290 / NCIMB 6125 / NCTC 8237 / Type A).